A 751-amino-acid polypeptide reads, in one-letter code: Fusarisetin A cluster transcription factor fsa6 (751 aa).

A disordered region spans residues 1-35 (MADQAQDVRPTEWGPGKTPQGRARLPSSRPREKPQ). Positions 38–66 (CNLCRRRKLRCDRQRPCSSCAQRELGLSC) form a DNA-binding region, zn(2)-C6 fungal-type. Over residues 107-116 (NVNAQDQVGA) the composition is skewed to polar residues. The segment at 107-153 (NVNAQDQVGATPSPRGQPRGPDYPTPAAVHAPSTNEEPVSAAVSPAD) is disordered.

It localises to the nucleus. Its function is as follows. Transcription factor that regulates the expression of the gene cluster that mediates the biosynthesis of fusarisetin A. This chain is Fusarisetin A cluster transcription factor fsa6, found in Fusarium sp. (strain FN080326).